We begin with the raw amino-acid sequence, 232 residues long: Small ribosomal subunit protein uS2 (232 aa).

It belongs to the universal ribosomal protein uS2 family.

This is Small ribosomal subunit protein uS2 from Carboxydothermus hydrogenoformans (strain ATCC BAA-161 / DSM 6008 / Z-2901).